We begin with the raw amino-acid sequence, 286 residues long: CLA biosynthesis dehydrogenase/reductase (286 aa).

NAD(+) contacts are provided by Asp37, Asp63, Val64, Asn90, Tyr156, and Lys160. Tyr156 serves as the catalytic Proton acceptor.

The protein belongs to the short-chain dehydrogenases/reductases (SDR) family.

The protein resides in the cytoplasm. It catalyses the reaction (10S)-hydroxy-(12Z)-octadecenoate + NAD(+) = 10-oxo-(12Z)-octadecenoate + NADH + H(+). The enzyme catalyses 10-oxo-(11E)-octadecenoate + NADH + H(+) = 10-hydroxy-(11E)-octadecenoate + NAD(+). The catalysed reaction is 10-oxooctadecanoate + NADH + H(+) = 10-hydroxyoctadecanoate + NAD(+). It participates in lipid metabolism; fatty acid metabolism. In terms of biological role, is involved in a saturation metabolic pathway of polyunsaturated fatty acids, that detoxifies unsaturated fatty acids and generates hydroxy fatty acids, oxo fatty acids, conjugated fatty acids such as conjugated linoleic acids (CLAs), and partially saturated trans-fatty acids as intermediates. CLA-DH catalyzes the dehydrogenation/reduction steps in the production of 10-oxo-(12Z)-octadecenoate, 10-hydroxy-(11E)-octadecenoate and 10-hydroxyoctadecanoate during linoleate metabolism. As part of the gut microbiome, this enzyme modifies host fatty acid composition and is expected to improve human health by altering lipid metabolism related to the onset of metabolic syndrome. This chain is CLA biosynthesis dehydrogenase/reductase, found in Lactiplantibacillus plantarum (Lactobacillus plantarum).